The sequence spans 306 residues: Nucleotide-binding protein RSal33209_2275 (306 aa).

29-36 contacts ATP; it reads GMSGAGRS. 80–83 provides a ligand contact to GTP; that stretch reads DVRG.

Belongs to the RapZ-like family.

Displays ATPase and GTPase activities. The chain is Nucleotide-binding protein RSal33209_2275 from Renibacterium salmoninarum (strain ATCC 33209 / DSM 20767 / JCM 11484 / NBRC 15589 / NCIMB 2235).